Here is a 61-residue protein sequence, read N- to C-terminus: Photosystem II assembly protein Psb34 (61 aa).

A helical transmembrane segment spans residues Leu36 to Ala56.

It belongs to the Psb34 family. Part of the photosystem II (PSII) assembly intermediate RC47 complex (with D1, D2, CP47, PsbE, PsbF, PsbH, Psb27 and Psb28); minor amounts are found in other PSII complexes, including mature, dimeric PSII with PsbO and PsbV. No HliA or HliB are detected in any of these complexes. Its interaction with PSII requires both CP47 (psbB) and PsbH. HliA/HliB and Psb34 probably bind to a similar site on CP47; their binding seems to be mutually exclusive.

Its subcellular location is the cellular thylakoid membrane. Functionally, involved in photosystem II (PSII) assembly and/or repair. Probably involved in conversion of late PSII assembly intermediates into mature dimeric PSII, it may mediate the optimal equlibrium of HliA/HliB among the intermediates containing CP47 (psbB) to facilitate photoprotection during assembly. This Synechocystis sp. (strain ATCC 27184 / PCC 6803 / Kazusa) protein is Photosystem II assembly protein Psb34.